A 320-amino-acid chain; its full sequence is Probable cell division protein WhiA (320 aa).

The H-T-H motif DNA-binding region spans 282-315 (TLKELGEMLSPAIGKSGVNHRLRKIDEIATKLQE).

The protein belongs to the WhiA family.

Its function is as follows. Involved in cell division and chromosome segregation. The sequence is that of Probable cell division protein WhiA from Alkaliphilus oremlandii (strain OhILAs) (Clostridium oremlandii (strain OhILAs)).